We begin with the raw amino-acid sequence, 249 residues long: Proteasome subunit alpha type-7 (249 aa).

It belongs to the peptidase T1A family. As to quaternary structure, the 26S proteasome consists of a 20S proteasome core and two 19S regulatory subunits. The 20S proteasome core is a barrel-shaped complex made of 28 subunits that are arranged in four stacked rings. The two outer rings are each formed by seven alpha subunits, and the two inner rings are formed by seven beta subunits. The proteolytic activity is exerted by three beta-subunits PSMB5, PSMB6 and PSMB7. PSMA7 interacts directly with the PSMG1-PSMG2 heterodimer which promotes 20S proteasome assembly. Interacts with HIF1A. Interacts with RAB7A. Interacts with PRKN. Interacts with ABL1 and ABL2. Interacts with EMAP2. Interacts with MAVS.

It is found in the cytoplasm. It localises to the nucleus. Component of the 20S core proteasome complex involved in the proteolytic degradation of most intracellular proteins. This complex plays numerous essential roles within the cell by associating with different regulatory particles. Associated with two 19S regulatory particles, forms the 26S proteasome and thus participates in the ATP-dependent degradation of ubiquitinated proteins. The 26S proteasome plays a key role in the maintenance of protein homeostasis by removing misfolded or damaged proteins that could impair cellular functions, and by removing proteins whose functions are no longer required. Associated with the PA200 or PA28, the 20S proteasome mediates ubiquitin-independent protein degradation. This type of proteolysis is required in several pathways including spermatogenesis (20S-PA200 complex) or generation of a subset of MHC class I-presented antigenic peptides (20S-PA28 complex). Inhibits the transactivation function of HIF-1A under both normoxic and hypoxia-mimicking conditions. The interaction with EMAP2 increases the proteasome-mediated HIF-1A degradation under the hypoxic conditions. Plays a role in hepatitis C virus internal ribosome entry site-mediated translation. Mediates nuclear translocation of the androgen receptor (AR) and thereby enhances androgen-mediated transactivation. Promotes MAVS degradation and thereby negatively regulates MAVS-mediated innate immune response. The protein is Proteasome subunit alpha type-7 (PSMA7) of Gallus gallus (Chicken).